The following is a 59-amino-acid chain: Large ribosomal subunit protein uL30 (59 aa).

It belongs to the universal ribosomal protein uL30 family. Part of the 50S ribosomal subunit.

This chain is Large ribosomal subunit protein uL30, found in Hydrogenobaculum sp. (strain Y04AAS1).